The primary structure comprises 181 residues: Crossover junction endodeoxyribonuclease RuvC (181 aa).

Catalysis depends on residues D7, E67, and D139. Residues D7, E67, and D139 each coordinate Mg(2+).

This sequence belongs to the RuvC family. As to quaternary structure, homodimer which binds Holliday junction (HJ) DNA. The HJ becomes 2-fold symmetrical on binding to RuvC with unstacked arms; it has a different conformation from HJ DNA in complex with RuvA. In the full resolvosome a probable DNA-RuvA(4)-RuvB(12)-RuvC(2) complex forms which resolves the HJ. It depends on Mg(2+) as a cofactor.

It is found in the cytoplasm. The catalysed reaction is Endonucleolytic cleavage at a junction such as a reciprocal single-stranded crossover between two homologous DNA duplexes (Holliday junction).. In terms of biological role, the RuvA-RuvB-RuvC complex processes Holliday junction (HJ) DNA during genetic recombination and DNA repair. Endonuclease that resolves HJ intermediates. Cleaves cruciform DNA by making single-stranded nicks across the HJ at symmetrical positions within the homologous arms, yielding a 5'-phosphate and a 3'-hydroxyl group; requires a central core of homology in the junction. The consensus cleavage sequence is 5'-(A/T)TT(C/G)-3'. Cleavage occurs on the 3'-side of the TT dinucleotide at the point of strand exchange. HJ branch migration catalyzed by RuvA-RuvB allows RuvC to scan DNA until it finds its consensus sequence, where it cleaves and resolves the cruciform DNA. The chain is Crossover junction endodeoxyribonuclease RuvC from Cupriavidus necator (strain ATCC 17699 / DSM 428 / KCTC 22496 / NCIMB 10442 / H16 / Stanier 337) (Ralstonia eutropha).